We begin with the raw amino-acid sequence, 456 residues long: Glycine--tRNA ligase (456 aa).

Substrate contacts are provided by Arg-98 and Glu-168. Residues 200–202 (RNE), 210–215 (FRTREF), 285–286 (EL), and 329–332 (GVER) each bind ATP. 215–219 (FEQME) contacts substrate. 325–329 (EPSVG) contributes to the substrate binding site.

Belongs to the class-II aminoacyl-tRNA synthetase family. As to quaternary structure, homodimer.

The protein resides in the cytoplasm. It catalyses the reaction tRNA(Gly) + glycine + ATP = glycyl-tRNA(Gly) + AMP + diphosphate. Catalyzes the attachment of glycine to tRNA(Gly). The chain is Glycine--tRNA ligase from Mycoplasma capricolum subsp. capricolum (strain California kid / ATCC 27343 / NCTC 10154).